Consider the following 319-residue polypeptide: Cell division protein FtsN (319 aa).

Residues 1–30 (MAQRDYVRRSQPAPSRRKKSTSRKKQRNLP) are disordered. The Cytoplasmic portion of the chain corresponds to 1–33 (MAQRDYVRRSQPAPSRRKKSTSRKKQRNLPAVS). The mediates interaction with FtsA stretch occupies residues 4-6 (RDY). Residues 15–27 (SRRKKSTSRKKQR) show a composition bias toward basic residues. Residues 34–54 (PAMVAIAAAVLVTFIGGLYFI) form a helical membrane-spanning segment. The Periplasmic portion of the chain corresponds to 55–319 (THHKKEESET…TNCIRLAAGG (265 aa)). Disordered stretches follow at residues 60–79 (EESE…PPKP) and 89–113 (LESR…TPEQ). 4 tandem repeats follow at residues 115–120 (TPEQRQ), 145–150 (TPEQRQ), 197–200 (QSKP), and 220–223 (QSKP). The 2 X 6 AA repeats stretch occupies residues 115–150 (TPEQRQLLEQMQADMRQQPTQLVEVPWNEQTPEQRQ). The interval 140–245 (PWNEQTPEQR…PKPTAEKKDE (106 aa)) is disordered. Low complexity predominate over residues 143–171 (EQTPEQRQQTLQRQRQAQQLAEQQRLAQQ). Residues 172 to 221 (SRTTEQSWQQQTRTSQAAPVQAQPRQSKPASSQQPYQDLLQTPAHTTAQS) are compositionally biased toward polar residues. The tract at residues 197 to 223 (QSKPASSQQPYQDLLQTPAHTTAQSKP) is 2 X 4 AA repeats. Positions 222–238 (KPQQAAPVARAADAPKP) are enriched in low complexity. Positions 242-316 (KKDERRWMVQ…AGHTNCIRLA (75 aa)) constitute an SPOR domain. Cysteine 252 and cysteine 312 form a disulfide bridge.

It belongs to the FtsN family. As to quaternary structure, interacts with FtsA via its N-terminal cytoplasmic domain. Interacts with ZapA, FtsQ, FtsW and FtsI.

Its subcellular location is the cell inner membrane. Essential cell division protein that activates septal peptidoglycan synthesis and constriction of the cell. Acts on both sides of the membrane, via interaction with FtsA in the cytoplasm and interaction with the FtsQBL complex in the periplasm. These interactions may induce a conformational switch in both FtsA and FtsQBL, leading to septal peptidoglycan synthesis by FtsI and associated synthases. Required for full FtsI activity. Required for recruitment of AmiC to the septal ring. This chain is Cell division protein FtsN, found in Escherichia coli (strain K12).